The chain runs to 834 residues: Protein EFR3 homolog cmp44E (834 aa).

An HEAT repeat occupies 120–156 (NLFVESFLRMVQKLLEDSNPNLKIMATNSFVKFANIN). The chain crosses the membrane as a helical span at residues 595–612 (LHAISIGLLVLISRVSGI).

It belongs to the EFR3 family. In terms of tissue distribution, expression during embryogenesis is ubiquitous with notably higher levels in the CNS and brain.

The protein localises to the membrane. Functionally, an essential gene required for embryogenesis; required for cell viability. This is Protein EFR3 homolog cmp44E (stmA) from Drosophila melanogaster (Fruit fly).